Reading from the N-terminus, the 1163-residue chain is Ankyrin repeat-containing protein F37A4.4 (1163 aa).

An ANK repeat occupies 856–885; that stretch reads YGNTALHVATRRGYQNLVEILIKHGADRSF. The 97-residue stretch at 929 to 1025 folds into the BRCT domain; the sequence is LCVPEKFPVS…KLIEKDCDYL (97 aa).

This chain is Ankyrin repeat-containing protein F37A4.4, found in Caenorhabditis elegans.